We begin with the raw amino-acid sequence, 497 residues long: DNA-dependent metalloprotease SPRTN (497 aa).

Methionine 1 is subject to N-acetylmethionine. The 168-residue stretch at 46-213 (LQALFLQFND…KTCGGTYIKI (168 aa)) folds into the SprT-like domain. Histidine 112 provides a ligand contact to Zn(2+). Residue glutamate 113 is part of the active site. Residues histidine 116 and histidine 131 each contribute to the Zn(2+) site. Lysine 231 is modified (N6-acetyllysine). Residues 254–262 (FSGKGYVLG) carry the SHP-box motif. The residue at position 269 (serine 269) is a Phosphoserine. Lysine 304 participates in a covalent cross-link: Glycyl lysine isopeptide (Lys-Gly) (interchain with G-Cter in SUMO2). The PIP-box signature appears at 326 to 333 (QSVLSSYF). Lysine 342 participates in a covalent cross-link: Glycyl lysine isopeptide (Lys-Gly) (interchain with G-Cter in SUMO2); alternate. Residue lysine 342 forms a Glycyl lysine isopeptide (Lys-Gly) (interchain with G-Cter in ubiquitin); alternate linkage. Positions 344 to 459 (FRNVNGSPVK…ASAPQSLSSQ (116 aa)) are disordered. Residues 347-356 (VNGSPVKNGT) show a composition bias toward polar residues. Lysine 362 is covalently cross-linked (Glycyl lysine isopeptide (Lys-Gly) (interchain with G-Cter in SUMO2)). Over residues 383–404 (TSKVTAPASATVTSAAGTSATI) the composition is skewed to low complexity. A Phosphoserine modification is found at serine 384. Residues 413–424 (DQFLNKRPRLED) carry the Nuclear localization signal motif. Over residues 420 to 432 (PRLEDRTALDTIK) the composition is skewed to basic and acidic residues. Lysine 432 participates in a covalent cross-link: Glycyl lysine isopeptide (Lys-Gly) (interchain with G-Cter in SUMO2). The segment covering 442–459 (RSSSQPTAASAPQSLSSQ) has biased composition (low complexity). The UBZ4-type zinc-finger motif lies at 462-489 (LVNCPVCQGVVVESQINEHLDRCLEGNK). Zn(2+) is bound by residues cysteine 465, cysteine 468, histidine 480, and cysteine 484.

This sequence belongs to the Spartan family. Homodimer. Interacts (VIA PIP-box) with PCNA (when ubiquitinated). Interacts (via its SHP-box) with VCP/p97. Interacts with RAD18. Interacts with KCTD13 and POLD3. Requires Zn(2+) as cofactor. Autocatalytically cleaved in response to double-stranded DNA-binding: autocatalytic cleavage takes place in trans and leads to inactivation. In terms of processing, monoubiquitinated; monoubiquitination promotes exclusion from chromatin. Deubiquitinated by VCPIP1: deubiquitination is required for subsequent acetylation and recruitment to chromatin and DNA damage sites. Post-translationally, acetylated following deubiquitination by VCPIP1, leading to recruitment to chromatin and DNA damage sites. Phosphorylation by CHEK1 promotes recruitment to chromatin.

The protein localises to the nucleus. Its subcellular location is the chromosome. With respect to regulation, DNA-binding activates the protease activity: single-stranded DNA-binding specifically activates ability to cleave covalent DNA-protein cross-links (DPCs). In contrast, double-stranded DNA-binding specifically activates autocatalytic cleavage, and subsequent inactivation. In terms of biological role, DNA-dependent metalloendopeptidase that mediates the proteolytic cleavage of covalent DNA-protein cross-links (DPCs) during DNA synthesis, thereby playing a key role in maintaining genomic integrity. DPCs are highly toxic DNA lesions that interfere with essential chromatin transactions, such as replication and transcription, and which are induced by reactive agents, such as UV light or formaldehyde. Associates with the DNA replication machinery and specifically removes DPCs during DNA synthesis. Catalyzes proteolytic cleavage of the HMCES DNA-protein cross-link following unfolding by the BRIP1/FANCJ helicase. Acts as a pleiotropic protease for DNA-binding proteins cross-linked with DNA, such as TOP1, TOP2A, histones H3 and H4. Mediates degradation of DPCs that are not ubiquitinated, while it is not able to degrade ubiquitinated DPCs. SPRTN activation requires polymerase collision with DPCs followed by helicase bypass of DPCs. Involved in recruitment of VCP/p97 to sites of DNA damage. Also acts as an activator of CHEK1 during normal DNA replication by mediating proteolytic cleavage of CHEK1, thereby promoting CHEK1 removal from chromatin and subsequent activation. Does not activate CHEK1 in response to DNA damage. May also act as a 'reader' of ubiquitinated PCNA: recruited to sites of UV damage and interacts with ubiquitinated PCNA and RAD18, the E3 ubiquitin ligase that monoubiquitinates PCNA. Facilitates chromatin association of RAD18 and is required for efficient PCNA monoubiquitination, promoting a feed-forward loop to enhance PCNA ubiquitination and translesion DNA synthesis. The sequence is that of DNA-dependent metalloprotease SPRTN from Mus musculus (Mouse).